Consider the following 484-residue polypeptide: MKFIVKLFPEIMMKSKPVRMRFTKMLETNIRNVLKKVDESAKVKREWDKIMVLVPSDRPDLVEAFADRLSCIPGIAHVLQVNESTFESVDDIYQQTLALYKEQLVGKTFCVRVKRVGNHDFKSIEVERYVGGGLNQFTEATGVKLKNPDMTINLEIDRENLYLVVNRIQGLGGYPMATQEDVLSLISGGFDSGVSSYQFIKRGSRTHYCFFNLGGDQHEIGVKQVAYHLWQKYGESHKVKFISVPFDPVVTEILEKIDNGQMGVILKRMMMRTAARLADKMGIQALVTGEAMGQVSSQTLTNLNVIDRCTEQLILRPLIAMDKQDIINLSRKIGTEDFSKSIPEYCGVISQKPTVKAVLSKIEAEEQKFSDDLIERVLETAEIIDIREIATSMDTKITETETVGDVNSNEVIIDVRAPEEEEKDPLKLEGIEIKTIPFFKLATQFADLDKAKTYLLYCDRGVMSKLQALYLQEQGYENVKVYRP.

Residues E63–R167 enclose the THUMP domain. Residues L185–I186, K267, G289, and Q298 each bind ATP. A disulfide bridge connects residues C346 and C458. One can recognise a Rhodanese domain in the interval V406–P484. C458 serves as the catalytic Cysteine persulfide intermediate.

The protein belongs to the ThiI family.

The protein localises to the cytoplasm. It catalyses the reaction [ThiI sulfur-carrier protein]-S-sulfanyl-L-cysteine + a uridine in tRNA + 2 reduced [2Fe-2S]-[ferredoxin] + ATP + H(+) = [ThiI sulfur-carrier protein]-L-cysteine + a 4-thiouridine in tRNA + 2 oxidized [2Fe-2S]-[ferredoxin] + AMP + diphosphate. The enzyme catalyses [ThiS sulfur-carrier protein]-C-terminal Gly-Gly-AMP + S-sulfanyl-L-cysteinyl-[cysteine desulfurase] + AH2 = [ThiS sulfur-carrier protein]-C-terminal-Gly-aminoethanethioate + L-cysteinyl-[cysteine desulfurase] + A + AMP + 2 H(+). Its pathway is cofactor biosynthesis; thiamine diphosphate biosynthesis. In terms of biological role, catalyzes the ATP-dependent transfer of a sulfur to tRNA to produce 4-thiouridine in position 8 of tRNAs, which functions as a near-UV photosensor. Also catalyzes the transfer of sulfur to the sulfur carrier protein ThiS, forming ThiS-thiocarboxylate. This is a step in the synthesis of thiazole, in the thiamine biosynthesis pathway. The sulfur is donated as persulfide by IscS. The protein is tRNA sulfurtransferase of Shewanella sediminis (strain HAW-EB3).